The primary structure comprises 82 residues: Protein RALF-like 8 (82 aa).

The signal sequence occupies residues 1–28 (MGMSKSIKVILSLALVVFLALAGTKVEA). Intrachain disulfides connect C47–C55 and C67–C73.

This sequence belongs to the plant rapid alkalinization factor (RALF) family. In terms of tissue distribution, expressed in leaves and flowers.

It localises to the secreted. In terms of biological role, cell signaling peptide that may regulate plant stress, growth, and development. Mediates a rapid alkalinization of extracellular space by mediating a transient increase in the cytoplasmic Ca(2+) concentration leading to a calcium-dependent signaling events through a cell surface receptor and a concomitant activation of some intracellular mitogen-activated protein kinases. This is Protein RALF-like 8 (RALFL8) from Arabidopsis thaliana (Mouse-ear cress).